We begin with the raw amino-acid sequence, 483 residues long: Prenyltransferase vrtC (483 aa).

The protein belongs to the tryptophan dimethylallyltransferase family.

It functions in the pathway secondary metabolite biosynthesis; terpenoid biosynthesis. Prenyltransferase; part of the gene cluster that mediates the biosynthesis of viridicatumtoxin, a tetracycline-like fungal meroterpenoid with a unique, fused spirobicyclic ring system. The first step of the pathway is the production of the malonamoyl-CoA starter unit for the polyketide synthase vrtA. The aldolase vrtJ may be involved in the synthesis of the malonamate substrate for malonamoyl-CoA synthetase vrtB. The polyketide synthase vrtA then may utilize the malonamoyl-CoA starter unit, followed by sequential condensation of eight malonyl-CoA units to form the polyketide backbone. The cyclization of the last ring could be mediated by the lactamase-like protein vrtG. The proposed post-PKS tailoring steps are a hydroxylation at C5 catalyzed the cytochrome P450 monooxygenase vrtE, a hydroxylation at C12a catalyzed by VrtH and/or VrtI, and an O-methylation by the O-methyltransferase vrtF. VrtC is then proposed to catalyze the transfer of a geranyl group synthesized by vrtD to the aromatic C ring of the tetracyclic polyketide intermediate of viridicatumtoxin to yield previridicatumtoxin. Finally, the cytochrome P450 monooxygenase vrtK catalyzes the spirocyclization of the geranyl moiety of previridicatumtoxin to afford viridicatumtoxin. The sequence is that of Prenyltransferase vrtC from Penicillium aethiopicum.